The primary structure comprises 473 residues: ATP synthase subunit beta (473 aa).

An ATP-binding site is contributed by 153–160; sequence GGAGVGKT.

Belongs to the ATPase alpha/beta chains family. As to quaternary structure, F-type ATPases have 2 components, CF(1) - the catalytic core - and CF(0) - the membrane proton channel. CF(1) has five subunits: alpha(3), beta(3), gamma(1), delta(1), epsilon(1). CF(0) has three main subunits: a(1), b(2) and c(9-12). The alpha and beta chains form an alternating ring which encloses part of the gamma chain. CF(1) is attached to CF(0) by a central stalk formed by the gamma and epsilon chains, while a peripheral stalk is formed by the delta and b chains.

The protein resides in the cell inner membrane. The enzyme catalyses ATP + H2O + 4 H(+)(in) = ADP + phosphate + 5 H(+)(out). In terms of biological role, produces ATP from ADP in the presence of a proton gradient across the membrane. The catalytic sites are hosted primarily by the beta subunits. The sequence is that of ATP synthase subunit beta from Rickettsia bellii (strain RML369-C).